Consider the following 508-residue polypeptide: Probable zinc metalloprotease MCYG_04217 (508 aa).

N-linked (GlcNAc...) asparagine glycosylation is present at Asn111. The Zn(2+) site is built by His182, Asp202, and Glu238. Residue Asn253 is glycosylated (N-linked (GlcNAc...) asparagine). Position 265 (Asp265) interacts with Zn(2+). One can recognise a Fibronectin type-III domain in the interval 422-508; sequence MPRNVRVDTS…ERGVAVLPFP (87 aa). A glycan (N-linked (GlcNAc...) asparagine) is linked at Asn435.

The protein belongs to the peptidase M28 family. M28B subfamily. The cofactor is Zn(2+).

The protein resides in the secreted. This Arthroderma otae (strain ATCC MYA-4605 / CBS 113480) (Microsporum canis) protein is Probable zinc metalloprotease MCYG_04217.